The following is a 439-amino-acid chain: Capsid vertex component 1 (439 aa).

Belongs to the herpesviridae CVC1 protein family. Interacts (via C-terminus) with capsid vertex component 2/CVC2.

It localises to the virion. The protein resides in the host nucleus. In terms of biological role, capsid vertex-specific component that plays a role during viral DNA encapsidation, assuring correct genome cleavage and presumably stabilizing capsids that contain full-length viral genomes. This is Capsid vertex component 1 from Homo sapiens (Human).